A 181-amino-acid chain; its full sequence is Large ribosomal subunit protein uL5 (181 aa).

Belongs to the universal ribosomal protein uL5 family. As to quaternary structure, part of the 50S ribosomal subunit; part of the 5S rRNA/L5/L18/L25 subcomplex. Contacts the 5S rRNA and the P site tRNA. Forms a bridge to the 30S subunit in the 70S ribosome.

Functionally, this is one of the proteins that bind and probably mediate the attachment of the 5S RNA into the large ribosomal subunit, where it forms part of the central protuberance. In the 70S ribosome it contacts protein S13 of the 30S subunit (bridge B1b), connecting the 2 subunits; this bridge is implicated in subunit movement. Contacts the P site tRNA; the 5S rRNA and some of its associated proteins might help stabilize positioning of ribosome-bound tRNAs. This Campylobacter lari (strain RM2100 / D67 / ATCC BAA-1060) protein is Large ribosomal subunit protein uL5.